The primary structure comprises 100 residues: Urease subunit gamma (100 aa).

The protein belongs to the urease gamma subunit family. As to quaternary structure, heterotrimer of UreA (gamma), UreB (beta) and UreC (alpha) subunits. Three heterotrimers associate to form the active enzyme.

Its subcellular location is the cytoplasm. It carries out the reaction urea + 2 H2O + H(+) = hydrogencarbonate + 2 NH4(+). It participates in nitrogen metabolism; urea degradation; CO(2) and NH(3) from urea (urease route): step 1/1. The chain is Urease subunit gamma from Mycobacterium bovis (strain ATCC BAA-935 / AF2122/97).